The primary structure comprises 730 residues: Propionyl-CoA carboxylase alpha chain, mitochondrial (730 aa).

Residues 1–52 constitute a mitochondrion transit peptide; it reads MAGLWVGGSVLVAAGRRGSRSPRPLMRSVALWTLKHVPQYSRQRLLVSRSLC. The region spanning 62 to 509 is the Biotin carboxylation domain; sequence TFDKILIANR…NTKFLSDVYP (448 aa). Position 65 is an N6-acetyllysine; alternate (Lys65). Lys65 is subject to N6-succinyllysine; alternate. Position 119 is an N6-succinyllysine (Lys119). N6-acetyllysine; alternate is present on Lys150. Position 150 is an N6-succinyllysine; alternate (Lys150). Residue Lys154 is modified to N6-acetyllysine. Lys177 lines the ATP pocket. The ATP-grasp domain maps to 181-378; it reads KLLAKKAKVN…LVQEMIRVAK (198 aa). Lys188 carries the N6-succinyllysine modification. At Lys200 the chain carries N6-acetyllysine; alternate. Position 200 is an N6-succinyllysine; alternate (Lys200). ATP is bound by residues 209–270, Glu261, and Asn296; that span reads AREI…PRHI. Ser252 is subject to Phosphoserine. Lys262 carries the N6-succinyllysine modification. 3 residues coordinate Mg(2+): Glu336, Glu349, and Asn351. Glu336, Glu349, and Asn351 together coordinate Mn(2+). The active site involves Glu349. The residue at position 407 (Lys407) is an N6-succinyllysine. Phe409 lines the biotin pocket. Lys502, Lys513, and Lys650 each carry N6-succinyllysine. The Biotinyl-binding domain maps to 655–730; it reads KAAEDTSSIL…GEGDLLVELE (76 aa). At Lys696 the chain carries N6-biotinyllysine.

As to quaternary structure, the holoenzyme is a dodecamer composed of 6 PCCA/alpha subunits and 6 PCCB/beta subunits. Interacts (via the biotin carboxylation domain) with SIRT4. Interacts with SIRT3 and SIRT5. The cofactor is Mg(2+). Requires Mn(2+) as cofactor. Biotin is required as a cofactor. Acetylated. In terms of processing, the biotin cofactor is covalently attached to the C-terminal biotinyl-binding domain and is required for the catalytic activity. Biotinylation is catalyzed by HLCS.

The protein resides in the mitochondrion matrix. It catalyses the reaction propanoyl-CoA + hydrogencarbonate + ATP = (S)-methylmalonyl-CoA + ADP + phosphate + H(+). The catalysed reaction is butanoyl-CoA + hydrogencarbonate + ATP = (2S)-ethylmalonyl-CoA + ADP + phosphate + H(+). Its pathway is metabolic intermediate metabolism; propanoyl-CoA degradation; succinyl-CoA from propanoyl-CoA: step 1/3. Functionally, this is one of the 2 subunits of the biotin-dependent propionyl-CoA carboxylase (PCC), a mitochondrial enzyme involved in the catabolism of odd chain fatty acids, branched-chain amino acids isoleucine, threonine, methionine, and valine and other metabolites. Propionyl-CoA carboxylase catalyzes the carboxylation of propionyl-CoA/propanoyl-CoA to D-methylmalonyl-CoA/(S)-methylmalonyl-CoA. Within the holoenzyme, the alpha subunit catalyzes the ATP-dependent carboxylation of the biotin carried by the biotin carboxyl carrier (BCC) domain, while the beta subunit then tranfers the carboxyl group from carboxylated biotin to propionyl-CoA. Propionyl-CoA carboxylase also significantly acts on butyryl-CoA/butanoyl-CoA, which is converted to ethylmalonyl-CoA/(2S)-ethylmalonyl-CoA at a much lower rate. Other alternative minor substrates include (2E)-butenoyl-CoA/crotonoyl-CoA. This chain is Propionyl-CoA carboxylase alpha chain, mitochondrial, found in Sus scrofa (Pig).